The sequence spans 133 residues: Small ribosomal subunit protein uS8 (133 aa).

This sequence belongs to the universal ribosomal protein uS8 family. Part of the 30S ribosomal subunit. Contacts proteins S5 and S12.

In terms of biological role, one of the primary rRNA binding proteins, it binds directly to 16S rRNA central domain where it helps coordinate assembly of the platform of the 30S subunit. The protein is Small ribosomal subunit protein uS8 of Prochlorococcus marinus (strain MIT 9303).